The following is a 156-amino-acid chain: Cellulose synthase operon protein D (156 aa).

Its pathway is glycan metabolism; bacterial cellulose biosynthesis. Functionally, may have a major role in the perfection of crystallization, involved either in the pore structure itself or in the organization of the pores within the linear array of terminal synthesizing complexes (TCs). The polypeptide is Cellulose synthase operon protein D (acsD) (Komagataeibacter xylinus (Gluconacetobacter xylinus)).